A 355-amino-acid chain; its full sequence is 3-isopropylmalate dehydrogenase (355 aa).

Substrate is bound by residues Arg-90, Arg-100, Arg-128, and Asp-222. 3 residues coordinate Mg(2+): Asp-222, Asp-246, and Asp-250. 280–292 (GSAPDIAGKGVAN) provides a ligand contact to NAD(+).

It belongs to the isocitrate and isopropylmalate dehydrogenases family. LeuB type 1 subfamily. Homodimer. It depends on Mg(2+) as a cofactor. Requires Mn(2+) as cofactor.

The protein resides in the cytoplasm. The catalysed reaction is (2R,3S)-3-isopropylmalate + NAD(+) = 4-methyl-2-oxopentanoate + CO2 + NADH. Its pathway is amino-acid biosynthesis; L-leucine biosynthesis; L-leucine from 3-methyl-2-oxobutanoate: step 3/4. In terms of biological role, catalyzes the oxidation of 3-carboxy-2-hydroxy-4-methylpentanoate (3-isopropylmalate) to 3-carboxy-4-methyl-2-oxopentanoate. The product decarboxylates to 4-methyl-2 oxopentanoate. This Cupriavidus metallidurans (strain ATCC 43123 / DSM 2839 / NBRC 102507 / CH34) (Ralstonia metallidurans) protein is 3-isopropylmalate dehydrogenase.